A 358-amino-acid polypeptide reads, in one-letter code: Diels-Alderase phmD (358 aa).

It belongs to the Diels-Alderase family.

It participates in mycotoxin biosynthesis. Functionally, diels-Alderase; part of the gene cluster that mediates the biosynthesis of the mycotoxins phomacins, leucine-derived cytochalasans with potent actin polymerization-inhibitory activities and monocot-specific antigerminative activities. The first step in the pathway is catalyzed by the hybrid PKS-NRPS phmA, assisted by the enoyl reductase phmE, that are responsible for fusion of the leucine precursor and the polyketide backbone to produce a 2-pyrrolidone intermediate. The polyketide synthase module (PKS) of phmA is responsible for the synthesis of the polyketide backbone and the downstream nonribosomal peptide synthetase (NRPS) amidates the carboxyl end of the polyketide with the leucine precursor. Because phmA lacks a designated enoylreductase (ER) domain, the required activity is provided the enoyl reductase phmE. Reduction by the hydrolyase phmG, followed by dehydration and intra-molecular Diels-Alder cyclization by the Diels-Alderase phmD then yield the required isoindolone-fused macrocycle. A number of oxidative steps catalyzed by the tailoring cytochrome P450 monooxygenase phmB, the FAD-linked oxidoreductase phmC and the short-chain dehydrogenase/reductase phmF, are further required to afford the final products, phomacin D and phomacin E. This chain is Diels-Alderase phmD, found in Phaeosphaeria nodorum (strain SN15 / ATCC MYA-4574 / FGSC 10173) (Glume blotch fungus).